The chain runs to 182 residues: ATP-dependent protease subunit HslV (182 aa).

Threonine 2 is a catalytic residue. Na(+) is bound by residues glycine 157, cysteine 160, and threonine 163.

This sequence belongs to the peptidase T1B family. HslV subfamily. In terms of assembly, a double ring-shaped homohexamer of HslV is capped on each side by a ring-shaped HslU homohexamer. The assembly of the HslU/HslV complex is dependent on binding of ATP.

The protein resides in the cytoplasm. The enzyme catalyses ATP-dependent cleavage of peptide bonds with broad specificity.. With respect to regulation, allosterically activated by HslU binding. Protease subunit of a proteasome-like degradation complex believed to be a general protein degrading machinery. The polypeptide is ATP-dependent protease subunit HslV (Vibrio atlanticus (strain LGP32) (Vibrio splendidus (strain Mel32))).